The chain runs to 90 residues: Cell division protein CrgA (90 aa).

The tract at residues 1-25 (MPKARVTKNETAPVSSNPSANRTPV) is disordered. Residues 9 to 22 (NETAPVSSNPSANR) are compositionally biased toward polar residues. The next 2 membrane-spanning stretches (helical) occupy residues 38–58 (VIMF…YLVG) and 67–87 (LGAW…LMTM).

Belongs to the CrgA family.

The protein resides in the cell membrane. Functionally, involved in cell division. The polypeptide is Cell division protein CrgA (Corynebacterium glutamicum (strain R)).